A 694-amino-acid chain; its full sequence is Acetolactate synthase catalytic subunit, mitochondrial (694 aa).

A mitochondrion-targeting transit peptide spans 1–42; that stretch reads MLRSRQATNALRAVGQTRPLRSQTAVAFTQSLNKVPSNRRSE. The span at 45–58 shows a compositional bias: low complexity; it reads VATASSTASGAFNS. Residues 45–69 form a disordered region; sequence VATASSTASGAFNSQVRPTPSPTFN. The segment covering 59 to 69 has biased composition (polar residues); the sequence is QVRPTPSPTFN. E140 serves as a coordination point for thiamine diphosphate. Residues R242, 358 to 379, and 410 to 429 each bind FAD; these read HGSA…LGGR and EIMP…IVGD. The interval 505–585 is thiamine pyrophosphate binding; the sequence is QHQMWTAQHF…VKVIVLNNEE (81 aa). D556, N583, and E585 together coordinate Mg(2+).

Belongs to the TPP enzyme family. Homodimer. The cofactor is Mg(2+). Thiamine diphosphate is required as a cofactor.

Its subcellular location is the mitochondrion. The enzyme catalyses 2 pyruvate + H(+) = (2S)-2-acetolactate + CO2. It carries out the reaction 2-oxobutanoate + pyruvate + H(+) = (S)-2-ethyl-2-hydroxy-3-oxobutanoate + CO2. The protein operates within amino-acid biosynthesis; L-isoleucine biosynthesis; L-isoleucine from 2-oxobutanoate: step 1/4. It participates in amino-acid biosynthesis; L-valine biosynthesis; L-valine from pyruvate: step 1/4. Functionally, acetolactate synthase catalytic subunit, mitochondrial; part of the gene cluster that mediates the biosynthesis of chlorflavonin, a fungal flavonoid with acetolactate synthase inhibitory activity. Is not direcly involved in chlorflavonin biosynthesis but acts as a self-resistant protein that effectively confers chlorflavonin resistance to the native host. As a catalytic subunit of mitochondrial acetolactate synthase, catalyzes the first of a series of common steps in the biosynthesis of the branched-chain amino acids. Catalyzes the irreversible decarboxylation of pyruvate to a bound hydroxyethyl group that then condenses with either a second pyruvate molecule to form 2-acetolactate (AL) or with 2-ketobutyrate to form 2-aceto-2-hydroxybutyrate (AHB). The first product is the precursor for valine and leucine biosynthesis, while the second leads to isoleucine. This is Acetolactate synthase catalytic subunit, mitochondrial from Aspergillus candidus.